The sequence spans 195 residues: Dephospho-CoA kinase (195 aa).

The 194-residue stretch at 2–195 (IISLTGGIGV…DIVDSLNLNT (194 aa)) folds into the DPCK domain. 10–15 (GVGKSF) is an ATP binding site.

This sequence belongs to the CoaE family.

It localises to the cytoplasm. It carries out the reaction 3'-dephospho-CoA + ATP = ADP + CoA + H(+). It functions in the pathway cofactor biosynthesis; coenzyme A biosynthesis; CoA from (R)-pantothenate: step 5/5. In terms of biological role, catalyzes the phosphorylation of the 3'-hydroxyl group of dephosphocoenzyme A to form coenzyme A. The protein is Dephospho-CoA kinase of Wolbachia pipientis wMel.